Consider the following 97-residue polypeptide: Sugar transporter SemiSWEET (97 aa).

Residues Ile-4 to Thr-70 enclose the PQ-loop domain. Transmembrane regions (helical) follow at residues Met-15–Val-35, Leu-44–Tyr-65, and Ile-71–Ala-91.

In terms of assembly, homodimer.

It localises to the cell membrane. Its function is as follows. The homodimer mediates transmembrane sugar transport down a concentration gradient. Transport is probably effected by rocking-type movements, where a cargo-binding cavity opens first on one and then on the other side of the membrane. In Vibrio sp. (strain N418), this protein is Sugar transporter SemiSWEET.